Consider the following 376-residue polypeptide: GTPase Obg (376 aa).

The Obg domain occupies 1–158; the sequence is MFIDSVNLTL…RDVRLELKLI (158 aa). The OBG-type G domain occupies 159–359; the sequence is ADVGLVGFPN…LKFSLLELLK (201 aa). GTP-binding positions include 165–172, 190–194, 212–215, 280–283, and 340–342; these read GFPNVGKS, FTTLT, DIPG, TRMD, and SSA. Residues Ser-172 and Thr-192 each coordinate Mg(2+).

This sequence belongs to the TRAFAC class OBG-HflX-like GTPase superfamily. OBG GTPase family. Monomer. Requires Mg(2+) as cofactor.

The protein resides in the cytoplasm. An essential GTPase which binds GTP, GDP and possibly (p)ppGpp with moderate affinity, with high nucleotide exchange rates and a fairly low GTP hydrolysis rate. Plays a role in control of the cell cycle, stress response, ribosome biogenesis and in those bacteria that undergo differentiation, in morphogenesis control. This is GTPase Obg from Campylobacter curvus (strain 525.92).